A 1761-amino-acid chain; its full sequence is 6-methylsalicylic acid synthase AOL_s00215g283 (1761 aa).

Residues 18–443 form the Ketosynthase family 3 (KS3) domain; it reads QDDIAIIGMA…GTVAHAVIEQ (426 aa). Residues Cys-190, His-325, and His-367 each act as for beta-ketoacyl synthase activity in the active site. Residues 554–870 are malonyl-CoA:ACP transacylase (MAT) domain; it reads VWVFSGHGAH…ALGKLHCHGA (317 aa). The active-site For malonyltransferase activity is the Ser-641. An N-terminal hotdog fold region spans residues 918 to 1038; the sequence is HVLLGAKHQV…GHVANNEWSK (121 aa). Residues 918–1187 are dehydratase (DH) domain; sequence HVLLGAKHQV…NGMRFSAVEG (270 aa). A PKS/mFAS DH domain is found at 918–1191; it reads HVLLGAKHQV…FSAVEGTPGA (274 aa). The active-site Proton acceptor; for dehydratase activity is the His-950. The interval 1050–1191 is C-terminal hotdog fold; it reads LPSVKPSFAT…FSAVEGTPGA (142 aa). The active-site Proton donor; for dehydratase activity is the Asp-1113. Positions 1399–1587 are ketoreductase (KR) domain; it reads GTYLITGGLG…IVSFLWTSWN (189 aa). The tract at residues 1654-1680 is disordered; it reads PRKRAESSGTEAVSKGEVSEKAPVPKS. The Carrier domain maps to 1686 to 1761; the sequence is EYLQNAISEC…HLVKWFEEKI (76 aa). Ser-1721 is subject to O-(pantetheine 4'-phosphoryl)serine.

The enzyme catalyses 3 malonyl-CoA + acetyl-CoA + NADPH + 3 H(+) = 6-methylsalicylate + 3 CO2 + NADP(+) + 4 CoA + H2O. Its pathway is secondary metabolite biosynthesis; terpenoid biosynthesis. Its function is as follows. 6-methylsalicylic acid synthase; part of the gene cluster that mediates the biosynthesis of sesquiterpenyl epoxy-cyclohexenoids (SECs) such as anthrobotrisins and arthrosporols, metabolites that possess a novel hybrid carbon skeleton consisting of a polyketide-derived epoxycyclohexenol combined with a terpenoid-derived monocyclic sesquiterpenol substructure (PKS-PTS hybrid). The SEC pathway plays an important role for fungal soil colonization via decreasing fungal nematode-capturing ability. Within the pathway, the polyketide synthase (PKS) AOL_s00215g283 catalyzes the biosynthesis of 6-methylsalicylic acid (6-MSA) via condensation of 1 acetate and 3 malonate units. AOL_s00215g283 performs a series of programmed reactions including Claisen condensation, dehydration, reduction, and cyclization to yield 6-MSA. The pathway begins with the biosynthesis of 6-methylsalicylic acid (6-MSA), the first precursor of the polyketide-derived epoxycyclohexenol in arthrosporols, by the polyketide synthase (PKS) AOL_s00215g283. The 6-methylsalicylic acid decarboxylase AOL_s00215g281 then catalyzes the decarboxylation of 6-methylsalicylic acid to yield m-cresol. The cytochrome P450 monooxygenase AOL_s00215g282 further oxidizes m-cresol to yield toluquinol. With the assistance of the oxidoreductase AOL_s00215g277, the polyprenyl transferase AOL_s00215g276 catalyzes the farnesylation of toluquinol to produce farnesyl hydroquinone, the hybrid precursor for biosynthesis of SECs. Farnesyl hydroquinone undergoes epoxidation and then subsequent dehydrogenation to form farnesyl epoxy-quinone, the first and simplest SEC. The cytochrome P450 monooxygenase AOL_s00215g278 and the FAD-dependent monooxygenase AOL_s00215g279 might be involved in the oxygenation of the phenol moiety, most likely in the epoxy formation. The cytochrome P450 monooxygenases AOL_s00215g274 and AOL_s00215g280 are involved in specific regional ketone reductions at respectively C-4 and C-1 of farnesyl epoxy-quinone PubMed:33823587. This is 6-methylsalicylic acid synthase AOL_s00215g283 from Arthrobotrys oligospora (strain ATCC 24927 / CBS 115.81 / DSM 1491) (Nematode-trapping fungus).